Consider the following 639-residue polypeptide: Altered inheritance of mitochondria protein 9, mitochondrial (639 aa).

The transit peptide at 1–45 (MLMSKAPKLGNLLSKNSIKIVSGSKLRCNLKYINVRYISDTPDKV) directs the protein to the mitochondrion. Positions 619–639 (VSSEAQSEVQSEVQSSTENKD) are disordered.

This sequence belongs to the AIM9 family.

It is found in the mitochondrion. In Vanderwaltozyma polyspora (strain ATCC 22028 / DSM 70294 / BCRC 21397 / CBS 2163 / NBRC 10782 / NRRL Y-8283 / UCD 57-17) (Kluyveromyces polysporus), this protein is Altered inheritance of mitochondria protein 9, mitochondrial (AIM9).